The primary structure comprises 221 residues: Ependymin-2 (221 aa).

Positions 1 to 21 (MQDFAFAALSIWLCLGATALA) are cleaved as a signal peptide. N-linked (GlcNAc...) asparagine glycans are attached at residues Asn33, Asn73, and Asn97.

The protein belongs to the ependymin family. Binds calcium through the terminal sialic acids. EPDs are synthesized in the meninx and secreted in the cerebrospinal fluid.

The protein resides in the secreted. May play a role in neural plasticity. May be involved during axon regeneration. This chain is Ependymin-2 (epd2), found in Salmo salar (Atlantic salmon).